The following is a 239-amino-acid chain: 7-cyano-7-deazaguanine synthase (239 aa).

Position 13 to 23 (13 to 23) interacts with ATP; it reads LSGGLDSMVTA. Zn(2+)-binding residues include C193, C203, C206, and C209.

Belongs to the QueC family. Zn(2+) serves as cofactor.

The catalysed reaction is 7-carboxy-7-deazaguanine + NH4(+) + ATP = 7-cyano-7-deazaguanine + ADP + phosphate + H2O + H(+). Its pathway is purine metabolism; 7-cyano-7-deazaguanine biosynthesis. Catalyzes the ATP-dependent conversion of 7-carboxy-7-deazaguanine (CDG) to 7-cyano-7-deazaguanine (preQ(0)). This Erythrobacter litoralis (strain HTCC2594) protein is 7-cyano-7-deazaguanine synthase.